A 450-amino-acid chain; its full sequence is Phosphoglucosamine mutase (450 aa).

Serine 102 (phosphoserine intermediate) is an active-site residue. Mg(2+) contacts are provided by serine 102, aspartate 243, aspartate 245, and aspartate 247. Residue serine 102 is modified to Phosphoserine.

The protein belongs to the phosphohexose mutase family. Mg(2+) is required as a cofactor. Activated by phosphorylation.

It catalyses the reaction alpha-D-glucosamine 1-phosphate = D-glucosamine 6-phosphate. Its function is as follows. Catalyzes the conversion of glucosamine-6-phosphate to glucosamine-1-phosphate. The polypeptide is Phosphoglucosamine mutase (Allorhizobium ampelinum (strain ATCC BAA-846 / DSM 112012 / S4) (Agrobacterium vitis (strain S4))).